The chain runs to 129 residues: uncharacterized protein (129 aa).

Lys-121 participates in a covalent cross-link: Isoglutamyl lysine isopeptide (Lys-Gln) (interchain with Q-Cter in protein Pup).

This is an uncharacterized protein from Mycolicibacterium smegmatis (strain ATCC 700084 / mc(2)155) (Mycobacterium smegmatis).